The chain runs to 428 residues: Adenylosuccinate synthetase (428 aa).

GTP-binding positions include 12–18 (GDEGKGK) and 40–42 (GHT). Catalysis depends on aspartate 13, which acts as the Proton acceptor. Residues aspartate 13 and glycine 40 each contribute to the Mg(2+) site. Residues 13–16 (DEGK), 38–41 (NAGH), threonine 128, arginine 142, glutamine 222, threonine 237, and arginine 301 each bind IMP. Histidine 41 functions as the Proton donor in the catalytic mechanism. Residue 297–303 (VNTGRAR) coordinates substrate. GTP is bound by residues arginine 303, 329–331 (KLD), and 411–413 (STS).

The protein belongs to the adenylosuccinate synthetase family. In terms of assembly, homodimer. Mg(2+) serves as cofactor.

The protein resides in the cytoplasm. The catalysed reaction is IMP + L-aspartate + GTP = N(6)-(1,2-dicarboxyethyl)-AMP + GDP + phosphate + 2 H(+). Its pathway is purine metabolism; AMP biosynthesis via de novo pathway; AMP from IMP: step 1/2. Functionally, plays an important role in the de novo pathway of purine nucleotide biosynthesis. Catalyzes the first committed step in the biosynthesis of AMP from IMP. This Caulobacter vibrioides (strain ATCC 19089 / CIP 103742 / CB 15) (Caulobacter crescentus) protein is Adenylosuccinate synthetase.